A 229-amino-acid polypeptide reads, in one-letter code: Nisin biosynthesis regulatory protein NisR (229 aa).

The Response regulatory domain occupies 4-117; sequence KILIVDDDQE…QLVAKVEANI (114 aa). Aspartate 53 bears the 4-aspartylphosphate mark. Positions 132-229 form a DNA-binding region, ompR/PhoB-type; sequence EIRRDLGPIT…VRGLGYQWHG (98 aa).

In terms of processing, phosphorylated by NisK.

Functionally, member of the two-component regulatory system NisK/NisR involved in the regulation of the biosynthesis of lantibiotic nisin. NisR may function as a regulatory protein. The polypeptide is Nisin biosynthesis regulatory protein NisR (nisR) (Lactococcus lactis subsp. lactis (Streptococcus lactis)).